The primary structure comprises 203 residues: MIGRLRGIIIEKQPPLVLIEVGGVGYEVHMPMTCFYELPEAGQEAIVFTHFVVREDAQLLYGFNNKQERTLFKELIKTNGVGPKLALAILSGMSAQQFVNAVEREEVGALVKLPGIGKKTAERLIVEMKDRFKGLHGDLFTPAADLVLTSPASPATNDAEQEAVAALVALGYKPQEASRMVSKIARPDASSETLIREALRAAL.

The interval 1 to 64 (MIGRLRGIII…EDAQLLYGFN (64 aa)) is domain I. The interval 65 to 142 (NKQERTLFKE…KGLHGDLFTP (78 aa)) is domain II. The segment at 143–154 (AADLVLTSPASP) is flexible linker. A domain III region spans residues 155–203 (ATNDAEQEAVAALVALGYKPQEASRMVSKIARPDASSETLIREALRAAL).

The protein belongs to the RuvA family. Homotetramer. Forms an RuvA(8)-RuvB(12)-Holliday junction (HJ) complex. HJ DNA is sandwiched between 2 RuvA tetramers; dsDNA enters through RuvA and exits via RuvB. An RuvB hexamer assembles on each DNA strand where it exits the tetramer. Each RuvB hexamer is contacted by two RuvA subunits (via domain III) on 2 adjacent RuvB subunits; this complex drives branch migration. In the full resolvosome a probable DNA-RuvA(4)-RuvB(12)-RuvC(2) complex forms which resolves the HJ.

The protein localises to the cytoplasm. Functionally, the RuvA-RuvB-RuvC complex processes Holliday junction (HJ) DNA during genetic recombination and DNA repair, while the RuvA-RuvB complex plays an important role in the rescue of blocked DNA replication forks via replication fork reversal (RFR). RuvA specifically binds to HJ cruciform DNA, conferring on it an open structure. The RuvB hexamer acts as an ATP-dependent pump, pulling dsDNA into and through the RuvAB complex. HJ branch migration allows RuvC to scan DNA until it finds its consensus sequence, where it cleaves and resolves the cruciform DNA. This Escherichia coli O9:H4 (strain HS) protein is Holliday junction branch migration complex subunit RuvA.